The following is a 302-amino-acid chain: Aquaporin NIP3-1 (302 aa).

Residues 1–31 are disordered; it reads MEPGSTPPNGSAPATPGTPAPLFSSGGPRVD. The span at 7-21 shows a compositional bias: low complexity; sequence PPNGSAPATPGTPAP. 2 consecutive transmembrane segments (helical) span residues 76 to 96 and 102 to 122; these read LGAEFVGTFILIFFATAAPIV and GAISPFGNAACAGLAVATVIL. Residues 133 to 135 carry the NPA 1 motif; it reads NPS. The next 3 helical transmembrane spans lie at 149-169, 193-213, and 217-237; these read LQVPAYVAVQALASVCAAFAL, AFFTEFIISFNLLFVVTAVAT, and AVGELAGIAVGAAVTLNILVA. Positions 246–248 match the NPA 2 motif; it reads NPV. Residues 264 to 284 form a helical membrane-spanning segment; that stretch reads WIYLLAPTLGALAGASVYKAV.

This sequence belongs to the MIP/aquaporin (TC 1.A.8) family. NIP (TC 1.A.8.12) subfamily.

It localises to the membrane. Functionally, aquaporins facilitate the transport of water and small neutral solutes across cell membranes. This chain is Aquaporin NIP3-1 (NIP3-1), found in Zea mays (Maize).